The following is a 180-amino-acid chain: ATP-dependent protease subunit HslV (180 aa).

Threonine 9 is a catalytic residue. Na(+) contacts are provided by alanine 164, cysteine 167, and threonine 170.

Belongs to the peptidase T1B family. HslV subfamily. A double ring-shaped homohexamer of HslV is capped on each side by a ring-shaped HslU homohexamer. The assembly of the HslU/HslV complex is dependent on binding of ATP.

The protein localises to the cytoplasm. The catalysed reaction is ATP-dependent cleavage of peptide bonds with broad specificity.. With respect to regulation, allosterically activated by HslU binding. In terms of biological role, protease subunit of a proteasome-like degradation complex believed to be a general protein degrading machinery. This chain is ATP-dependent protease subunit HslV, found in Leptospira borgpetersenii serovar Hardjo-bovis (strain JB197).